The following is a 156-amino-acid chain: Small ribosomal subunit protein uS7 (156 aa).

The protein belongs to the universal ribosomal protein uS7 family. Part of the 30S ribosomal subunit. Contacts proteins S9 and S11.

Its function is as follows. One of the primary rRNA binding proteins, it binds directly to 16S rRNA where it nucleates assembly of the head domain of the 30S subunit. Is located at the subunit interface close to the decoding center, probably blocks exit of the E-site tRNA. In Colwellia psychrerythraea (strain 34H / ATCC BAA-681) (Vibrio psychroerythus), this protein is Small ribosomal subunit protein uS7.